A 122-amino-acid polypeptide reads, in one-letter code: Large ribosomal subunit protein uL14 (122 aa).

This sequence belongs to the universal ribosomal protein uL14 family. As to quaternary structure, part of the 50S ribosomal subunit. Forms a cluster with proteins L3 and L19. In the 70S ribosome, L14 and L19 interact and together make contacts with the 16S rRNA in bridges B5 and B8.

Binds to 23S rRNA. Forms part of two intersubunit bridges in the 70S ribosome. The chain is Large ribosomal subunit protein uL14 from Magnetococcus marinus (strain ATCC BAA-1437 / JCM 17883 / MC-1).